The primary structure comprises 478 residues: Glycogen synthase (478 aa).

Lys-15 is a binding site for ADP-alpha-D-glucose.

Belongs to the glycosyltransferase 1 family. Bacterial/plant glycogen synthase subfamily.

The catalysed reaction is [(1-&gt;4)-alpha-D-glucosyl](n) + ADP-alpha-D-glucose = [(1-&gt;4)-alpha-D-glucosyl](n+1) + ADP + H(+). Its pathway is glycan biosynthesis; glycogen biosynthesis. Its function is as follows. Synthesizes alpha-1,4-glucan chains using ADP-glucose. The sequence is that of Glycogen synthase from Clostridium botulinum (strain Eklund 17B / Type B).